We begin with the raw amino-acid sequence, 1180 residues long: Protocadherin-12 (1180 aa).

The N-terminal stretch at 1–17 (MMLLLPFLLGLLGPGSY) is a signal peptide. The Extracellular portion of the chain corresponds to 18-716 (LFISGDCQEV…HEPGVLSTPA (699 aa)). Cadherin domains lie at 28 to 135 (ATVM…QPQF), 136 to 244 (PKDE…SPVF), 245 to 352 (AESS…APSI), 355 to 460 (TWAS…APVF), and 461 to 565 (EKSR…APEV). Residues asparagine 265 and asparagine 415 are each glycosylated (N-linked (GlcNAc...) asparagine). Asparagine 582, asparagine 659, and asparagine 662 each carry an N-linked (GlcNAc...) asparagine glycan. The region spanning 600 to 711 (PAGTGIPPKA…LRDSAHEPGV (112 aa)) is the Cadherin 6 domain. Residues 717–737 (LALICLAVLLAIFGLLLALFV) traverse the membrane as a helical segment. Over 738 to 1180 (SICRTERKDN…ESRLGCGRNL (443 aa)) the chain is Cytoplasmic. Disordered stretches follow at residues 857-930 (NASR…GPHQ) and 973-1026 (QFQP…PEED). Serine 859 carries the phosphoserine modification. The segment covering 904–918 (PASSATLRRQRNFNG) has biased composition (polar residues). Over residues 1014 to 1026 (PDLEEGPPSPEED) the composition is skewed to acidic residues. A Phosphoserine modification is found at serine 1064. The span at 1076-1093 (SSPDATTSEEPRTFQTFG) shows a compositional bias: polar residues. Disordered regions lie at residues 1076–1104 (SSPDATTSEEPRTFQTFGKTVGPGPELSP) and 1156–1180 (SGASASEAQGRKKAAESRLGCGRNL).

In terms of processing, N-glycosylated. Post-translationally, cleaved by ADAM10 close to the transmembrane domain to release the Protocadherin-12, secreted form in the serum. Cleavage results in reduced cellular adhesion in a cell migration assay. As to expression, expressed in endothelial cells: localizes in vasculogenic rather than angiogenic endothelium. Strongly expressed in a subset of invasive cells of the placenta, named glycogen-rich trophoblasts cells (at protein level). glycogen-rich trophoblasts cells originate from the from the ectoplacental cone where they rapidly form tight islets (at protein level). In adult mice, present at high level in mesangial cells of kidney glomeruli, while expression was not detected in other types of perivascular cells.

Its subcellular location is the cell membrane. It localises to the cell junction. It is found in the secreted. Its function is as follows. Cellular adhesion molecule that may play an important role in cell-cell interactions at interendothelial junctions. Acts as a regulator of cell migration, probably via increasing cell-cell adhesion. Promotes homotypic calcium-dependent aggregation and adhesion and clusters at intercellular junctions. Unable to bind to catenins, weakly associates with the cytoskeleton. The sequence is that of Protocadherin-12 from Mus musculus (Mouse).